The chain runs to 963 residues: Phosphoenolpyruvate carboxylase 2 (963 aa).

Position 11 is a phosphoserine (Ser-11). Active-site residues include His-172 and Lys-599. Phosphoserine is present on Ser-701.

The protein belongs to the PEPCase type 1 family. In terms of assembly, homotetramer. Requires Mg(2+) as cofactor. In terms of tissue distribution, expressed in all plant organs, with higher levels in stems and leaves.

The protein localises to the cytoplasm. The catalysed reaction is oxaloacetate + phosphate = phosphoenolpyruvate + hydrogencarbonate. By light-reversible phosphorylation. Functionally, through the carboxylation of phosphoenolpyruvate (PEP) it forms oxaloacetate, a four-carbon dicarboxylic acid source for the tricarboxylic acid cycle. This chain is Phosphoenolpyruvate carboxylase 2 (PPC2), found in Arabidopsis thaliana (Mouse-ear cress).